Reading from the N-terminus, the 129-residue chain is MDWLDDVKWDAQGLVPVIAQEQGTGDVLMLAWMNREALRQTAALGRAVYFSRSRGKLWFKGEDSGHAQTVHEIRLDCDRDVLLLRVTQQGHQPGIACHTGRHSCFFSRLGDGAWQAVDAVLKDPRAIYG.

Aspartate 76 lines the Mg(2+) pocket. Residue cysteine 77 participates in Zn(2+) binding. Positions 78 and 80 each coordinate Mg(2+). Zn(2+)-binding residues include cysteine 97 and cysteine 104.

The protein belongs to the PRA-CH family. In terms of assembly, homodimer. Mg(2+) serves as cofactor. Requires Zn(2+) as cofactor.

The protein localises to the cytoplasm. The enzyme catalyses 1-(5-phospho-beta-D-ribosyl)-5'-AMP + H2O = 1-(5-phospho-beta-D-ribosyl)-5-[(5-phospho-beta-D-ribosylamino)methylideneamino]imidazole-4-carboxamide. The protein operates within amino-acid biosynthesis; L-histidine biosynthesis; L-histidine from 5-phospho-alpha-D-ribose 1-diphosphate: step 3/9. In terms of biological role, catalyzes the hydrolysis of the adenine ring of phosphoribosyl-AMP. This chain is Phosphoribosyl-AMP cyclohydrolase, found in Verminephrobacter eiseniae (strain EF01-2).